A 980-amino-acid polypeptide reads, in one-letter code: Ankycorbin (980 aa).

Position 1 is an N-acetylmethionine (Met-1). A Phosphoserine modification is found at Ser-11. ANK repeat units follow at residues Lys-18 to Ser-51, Glu-52 to Ala-81, Thr-85 to Ser-114, Ser-118 to Leu-147, Asp-151 to Ser-180, Ser-184 to Leu-213, and Leu-217 to Leu-247. Residues Leu-247–Val-259 show a composition bias toward basic and acidic residues. The disordered stretch occupies residues Leu-247–Gly-301. The residue at position 249 (Thr-249) is a Phosphothreonine. The Nuclear localization signal signature appears at Pro-270–Pro-276. Phosphoserine is present on residues Ser-281, Ser-286, and Ser-293. A compositionally biased stretch (polar residues) spans Pro-282–Leu-299. Thr-295 and Thr-297 each carry phosphothreonine. A phosphoserine mark is found at Ser-300, Ser-304, Ser-318, Ser-327, Ser-329, Ser-340, Ser-341, Ser-350, Ser-358, Ser-419, Ser-512, Ser-515, Ser-667, and Ser-915. Residues Leu-349 to Ser-374 are a coiled coil. The disordered stretch occupies residues Tyr-387–Ser-423. The stretch at Thr-425–Arg-947 forms a coiled coil.

Interacts with PALLD. Associates with actin. However, does not bind F-actin directly. Highly expressed in placenta, muscle, kidney and testis. Moderately expressed in heart, brain, lung, liver and intestine. Isoform 2 is widely expressed and expressed in fetal and adult testes, and spermatozoa.

The protein localises to the cytoplasm. It localises to the cytoskeleton. The protein resides in the stress fiber. Its subcellular location is the cell cortex. It is found in the cell junction. The protein localises to the nucleus. Its function is as follows. Plays a role in actin regulation at the ectoplasmic specialization, a type of cell junction specific to testis. Important for establishment of sperm polarity and normal spermatid adhesion. May also promote integrity of Sertoli cell tight junctions at the blood-testis barrier. The protein is Ankycorbin (RAI14) of Homo sapiens (Human).